A 300-amino-acid chain; its full sequence is Glycine--tRNA ligase alpha subunit (300 aa).

It belongs to the class-II aminoacyl-tRNA synthetase family. Tetramer of two alpha and two beta subunits.

It localises to the cytoplasm. It carries out the reaction tRNA(Gly) + glycine + ATP = glycyl-tRNA(Gly) + AMP + diphosphate. The protein is Glycine--tRNA ligase alpha subunit of Pseudoalteromonas translucida (strain TAC 125).